A 500-amino-acid chain; its full sequence is NAD(P)H-quinone oxidoreductase chain 4, chloroplastic (500 aa).

14 helical membrane passes run Phe4–Leu24, Leu37–Leu57, Ile87–Val107, Ala111–Ser131, Leu134–Met154, Phe167–Leu187, Ala208–Ile228, His242–Val262, Ala272–Ala292, Ile305–Asp325, Gly330–Gly350, Leu386–Thr406, Ile416–Met436, and Leu462–Val482.

It belongs to the complex I subunit 4 family.

The protein localises to the plastid. Its subcellular location is the chloroplast thylakoid membrane. The catalysed reaction is a plastoquinone + NADH + (n+1) H(+)(in) = a plastoquinol + NAD(+) + n H(+)(out). It catalyses the reaction a plastoquinone + NADPH + (n+1) H(+)(in) = a plastoquinol + NADP(+) + n H(+)(out). The polypeptide is NAD(P)H-quinone oxidoreductase chain 4, chloroplastic (Oenothera parviflora (Small-flowered evening primrose)).